Consider the following 184-residue polypeptide: Adenine phosphoribosyltransferase (184 aa).

The protein belongs to the purine/pyrimidine phosphoribosyltransferase family. Homodimer.

It is found in the cytoplasm. The enzyme catalyses AMP + diphosphate = 5-phospho-alpha-D-ribose 1-diphosphate + adenine. Its pathway is purine metabolism; AMP biosynthesis via salvage pathway; AMP from adenine: step 1/1. Its function is as follows. Catalyzes a salvage reaction resulting in the formation of AMP, that is energically less costly than de novo synthesis. In Acidovorax sp. (strain JS42), this protein is Adenine phosphoribosyltransferase.